A 78-amino-acid chain; its full sequence is Apolipoprotein C-I (78 aa).

The first 26 residues, 1–26 (MRLILWLPVLVVVLLMVTEGPAPAQG), serve as a signal peptide directing secretion.

Belongs to the apolipoprotein C1 family.

Its subcellular location is the secreted. Functionally, inhibitor of lipoprotein binding to the low density lipoprotein (LDL) receptor, LDL receptor-related protein, and very low density lipoprotein (VLDL) receptor. Associates with high density lipoproteins (HDL) and the triacylglycerol-rich lipoproteins in the plasma and makes up about 10% of the protein of the VLDL and 2% of that of HDL. Appears to interfere directly with fatty acid uptake and is also the major plasma inhibitor of cholesteryl ester transfer protein (CETP). Binds free fatty acids and reduces their intracellular esterification. Modulates the interaction of APOE with beta-migrating VLDL and inhibits binding of beta-VLDL to the LDL receptor-related protein. The protein is Apolipoprotein C-I (APOC1) of Panthera tigris altaica (Siberian tiger).